The chain runs to 620 residues: Probable potassium transport system protein Kup (620 aa).

12 consecutive transmembrane segments (helical) span residues 11 to 31 (LAFLAMGIVYGDIGTSPLYAF), 51 to 71 (ILSLVFWAFVLIVSIKYLLLV), 100 to 120 (IAMLLGILATGFFFGEAVITP), 138 to 158 (LAPYVLPIAMMIIVALFAVQA), 167 to 187 (FFAPVMLLWFLVLALLGAHAI), 202 to 222 (AVHFVLLYGQHTLFILGLVVL), 246 to 266 (WFALVMPSLLLNYFGQGAYLL), 288 to 308 (LILLATFATVIASQAVISGIF), 334 to 354 (GQIYVPAANMLLFVAVIFVML), 364 to 384 (AAYGIAVTAIMMISSLLLVLV), 396 to 416 (VVTIGIVFIGMDSLLLASTST), and 418 to 438 (LMEGGWLPLLLGCVVFIVMYI).

This sequence belongs to the HAK/KUP transporter (TC 2.A.72) family.

It localises to the cell inner membrane. The catalysed reaction is K(+)(in) + H(+)(in) = K(+)(out) + H(+)(out). Its function is as follows. Transport of potassium into the cell. Likely operates as a K(+):H(+) symporter. The chain is Probable potassium transport system protein Kup from Vibrio cholerae serotype O1 (strain ATCC 39315 / El Tor Inaba N16961).